A 437-amino-acid chain; its full sequence is Transcription factor 12 (437 aa).

3 disordered regions span residues 1–68, 80–123, and 244–335; these read EFHD…QTGD, PDHT…YENS, and ASNT…ERRM. The span at 13-37 shows a compositional bias: polar residues; the sequence is VSPTDISTSLPPMSSFHRGSTSSSP. Position 44 is a phosphothreonine (Thr44). Phosphoserine is present on Ser64. A compositionally biased stretch (low complexity) spans 83 to 94; sequence TSSSFPSNPSTP. 2 stretches are compositionally biased toward polar residues: residues 95 to 107 and 114 to 123; these read VGSP…TSQW and APSSPSYENS. 2 stretches are compositionally biased toward basic and acidic residues: residues 273-285 and 291-306; these read IKTE…ENLH and DDMK…DIKV. Residue Lys274 forms a Glycyl lysine isopeptide (Lys-Gly) (interchain with G-Cter in SUMO2) linkage. Ser295 carries the phosphoserine modification. Residue Lys305 forms a Glycyl lysine isopeptide (Lys-Gly) (interchain with G-Cter in SUMO2) linkage. Thr312 carries the post-translational modification Phosphothreonine. Phosphoserine is present on residues Ser313 and Ser314. A compositionally biased stretch (basic and acidic residues) spans 323–335; it reads PEQKIEREKERRM. Residues 332–385 enclose the bHLH domain; the sequence is ERRMANNARERLRVRDINEAFKELGRMCQLHLKSEKPQTKLLILHQAVAVILSL. Residues Lys364 and Lys408 each participate in a glycyl lysine isopeptide (Lys-Gly) (interchain with G-Cter in SUMO2) cross-link. The interval 387-410 is class A specific domain; that stretch reads QQVRERNLNPKAACLKRREEEKVS. Residues 405–437 form a disordered region; sequence EEEKVSAASAEPPTTLPGTHPGLSETTNPMGHL. The segment covering 416–427 has biased composition (low complexity); the sequence is PPTTLPGTHPGL. A compositionally biased stretch (polar residues) spans 428–437; sequence SETTNPMGHL.

In terms of assembly, efficient DNA binding requires dimerization with another bHLH protein. Forms homo- or heterooligomers with myogenin, E12 and ITF2 proteins. Interacts with NEUROD2. Interacts with PTF1A. Interacts with RUNX1T1. Interacts with BHLHA9.

It is found in the nucleus. Its function is as follows. Transcriptional regulator. Involved in the initiation of neuronal differentiation. Activates transcription by binding to the E box (5'-CANNTG-3'). Participates in the control of inducible RP4 gene expression in salivary cells. Binds to the RIPE3 element of the insulin II promoter. May be involved in the functional network that regulates the development of the GnRH axis. The sequence is that of Transcription factor 12 (TCF12) from Mesocricetus auratus (Golden hamster).